The sequence spans 399 residues: Argininosuccinate synthase (399 aa).

Residue 9 to 17 (AYSGGLDTS) participates in ATP binding. Tyr85 serves as a coordination point for L-citrulline. An ATP-binding site is contributed by Gly115. Residues Thr117, Asn121, and Asp122 each coordinate L-aspartate. Asn121 serves as a coordination point for L-citrulline. 4 residues coordinate L-citrulline: Arg125, Ser173, Glu258, and Tyr270.

The protein belongs to the argininosuccinate synthase family. Type 1 subfamily. Homotetramer.

It localises to the cytoplasm. The catalysed reaction is L-citrulline + L-aspartate + ATP = 2-(N(omega)-L-arginino)succinate + AMP + diphosphate + H(+). It functions in the pathway amino-acid biosynthesis; L-arginine biosynthesis; L-arginine from L-ornithine and carbamoyl phosphate: step 2/3. This chain is Argininosuccinate synthase, found in Streptococcus uberis (strain ATCC BAA-854 / 0140J).